The primary structure comprises 422 residues: 3-phosphoshikimate 1-carboxyvinyltransferase (422 aa).

3-phosphoshikimate contacts are provided by Lys20, Ser21, and Arg25. Phosphoenolpyruvate is bound at residue Lys20. Phosphoenolpyruvate is bound by residues Gly90 and Arg118. Residues Ser161, Ser162, Gln163, Ser189, Asp305, and Lys332 each contribute to the 3-phosphoshikimate site. Residue Gln163 coordinates phosphoenolpyruvate. Asp305 functions as the Proton acceptor in the catalytic mechanism. Residues Arg336 and Arg378 each coordinate phosphoenolpyruvate.

Belongs to the EPSP synthase family. As to quaternary structure, monomer.

It is found in the cytoplasm. The catalysed reaction is 3-phosphoshikimate + phosphoenolpyruvate = 5-O-(1-carboxyvinyl)-3-phosphoshikimate + phosphate. Its pathway is metabolic intermediate biosynthesis; chorismate biosynthesis. In terms of biological role, catalyzes the transfer of the enolpyruvyl moiety of phosphoenolpyruvate (PEP) to the 5-hydroxyl of shikimate-3-phosphate (S3P) to produce enolpyruvyl shikimate-3-phosphate and inorganic phosphate. The polypeptide is 3-phosphoshikimate 1-carboxyvinyltransferase (Nitrosopumilus maritimus (strain SCM1)).